Reading from the N-terminus, the 702-residue chain is Lipase maturation factor 2 (702 aa).

8 consecutive transmembrane segments (helical) span residues 10–30 (LFLQ…YTQI), 75–95 (AQGL…ALLL), 164–184 (DLPF…SGVV), 226–246 (LSVV…FAPI), 259–279 (LLQV…LTLV), 316–336 (LLLE…YFGL), 363–383 (VTLP…LVVL), and 398–418 (AGIQ…ISLV). N-linked (GlcNAc...) asparagine glycosylation is present at Asn488. Residues 636–656 (ILLWGLFGAVVAIRVVQTLLA) form a helical membrane-spanning segment. The tract at residues 660–702 (LQSSKQTREEKRKQTSKKDSRAASEQAAANSNSRDSWAPRRKK) is disordered. Residues 665 to 681 (QTREEKRKQTSKKDSRA) are compositionally biased toward basic and acidic residues. Positions 682 to 693 (ASEQAAANSNSR) are enriched in low complexity.

This sequence belongs to the lipase maturation factor family.

Its subcellular location is the endoplasmic reticulum membrane. Involved in the maturation of specific proteins in the endoplasmic reticulum. May be required for maturation and transport of active lipoprotein lipase (LPL) through the secretory pathway. The chain is Lipase maturation factor 2 (Lmf2) from Mus musculus (Mouse).